The sequence spans 66 residues: Large ribosomal subunit protein bL35 (66 aa).

Residues 20–40 form a disordered region; sequence GKVKHAQRGKRHGMIKRTKKQ.

This sequence belongs to the bacterial ribosomal protein bL35 family.

The protein is Large ribosomal subunit protein bL35 of Nitrobacter winogradskyi (strain ATCC 25391 / DSM 10237 / CIP 104748 / NCIMB 11846 / Nb-255).